We begin with the raw amino-acid sequence, 403 residues long: Synaptotagmin-7 (403 aa).

Over 1–16 (MYRDPEAASPGAPSRD) the chain is Vesicular. A helical transmembrane segment spans residues 17-37 (VLLVSAIITVSLSVTVVLCGL). The Cytoplasmic segment spans residues 38 to 403 (CHWCQRKLGK…PVAQWHQLKA (366 aa)). The residue at position 52 (S52) is a Phosphoserine. Residues 53–106 (LETVGTPDSGRGRSEKKAIKLPAGGKAVNTAPVPGQTPHDESDRRTEPRSSVSD) form a disordered region. T58 is modified (phosphothreonine). At S61 the chain carries Phosphoserine. The span at 90–100 (PHDESDRRTEP) shows a compositional bias: basic and acidic residues. Phosphoserine is present on residues S119 and S122. 2 C2 domains span residues 135 to 255 (NLGR…TFWK) and 266 to 399 (SRGE…AQWH). The Ca(2+) site is built by D166, D172, D225, D227, S230, D233, D297, D303, D357, D359, S362, and D365.

This sequence belongs to the synaptotagmin family. In terms of assembly, homodimer. Can also form heterodimers with SYT6, SYT9 and SYT10. Interacts with calmodulin (CALM1, CALM2 or CALM3). Interacts with CD63; required for localization to lysosomes. Interacts with APP. Requires Ca(2+) as cofactor. Post-translationally, palmitoylated at its vesicular N-terminus; palmitoylation is required for localization to lysosome and phagocytosis in macrophages. As to expression, expressed in a variety of adult and fetal tissues.

It localises to the cell membrane. It is found in the presynaptic cell membrane. Its subcellular location is the cytoplasmic vesicle. The protein localises to the secretory vesicle. The protein resides in the synaptic vesicle membrane. It localises to the lysosome membrane. It is found in the phagosome membrane. Its subcellular location is the peroxisome membrane. The protein localises to the secretory vesicle membrane. Ca(2+) sensor involved in Ca(2+)-dependent exocytosis of secretory and synaptic vesicles through Ca(2+) and phospholipid binding to the C2 domain. Ca(2+) induces binding of the C2-domains to phospholipid membranes and to assembled SNARE-complexes; both actions contribute to triggering exocytosis. SYT7 binds Ca(2+) with high affinity and slow kinetics compared to other synaptotagmins. Involved in Ca(2+)-triggered lysosomal exocytosis, a major component of the plasma membrane repair. Ca(2+)-regulated delivery of lysosomal membranes to the cell surface is also involved in the phagocytic uptake of particles by macrophages. Ca(2+)-triggered lysosomal exocytosis also plays a role in bone remodeling by regulating secretory pathways in osteoclasts and osteoblasts. In case of infection, involved in participates cell invasion by Trypanosoma cruzi via Ca(2+)-triggered lysosomal exocytosis. Involved in cholesterol transport from lysosome to peroxisome by promoting membrane contacts between lysosomes and peroxisomes: probably acts by promoting vesicle fusion by binding phosphatidylinositol-4,5-bisphosphate on peroxisomal membranes. Acts as a key mediator of synaptic facilitation, a process also named short-term synaptic potentiation: synaptic facilitation takes place at synapses with a low initial release probability and is caused by influx of Ca(2+) into the axon terminal after spike generation, increasing the release probability of neurotransmitters. Probably mediates synaptic facilitation by directly increasing the probability of release. May also contribute to synaptic facilitation by regulating synaptic vesicle replenishment, a process required to ensure that synaptic vesicles are ready for the arrival of the next action potential: SYT7 is required for synaptic vesicle replenishment by acting as a sensor for Ca(2+) and by forming a complex with calmodulin. Also acts as a regulator of Ca(2+)-dependent insulin and glucagon secretion in beta-cells. Triggers exocytosis by promoting fusion pore opening and fusion pore expansion in chromaffin cells. Also regulates the secretion of some non-synaptic secretory granules of specialized cells. The chain is Synaptotagmin-7 from Homo sapiens (Human).